We begin with the raw amino-acid sequence, 390 residues long: S-adenosylmethionine synthase (390 aa).

Position 15 (His-15) interacts with ATP. Position 17 (Asp-17) interacts with Mg(2+). Glu-43 is a K(+) binding site. 2 residues coordinate L-methionine: Glu-56 and Gln-99. The interval 99–109 (QSPDINQGVDR) is flexible loop. ATP contacts are provided by residues 164-166 (DAK), 230-231 (RF), Asp-239, 245-246 (RK), Ala-262, and Lys-266. An L-methionine-binding site is contributed by Asp-239. Lys-270 is a binding site for L-methionine.

Belongs to the AdoMet synthase family. Homotetramer; dimer of dimers. Mg(2+) is required as a cofactor. It depends on K(+) as a cofactor.

The protein resides in the cytoplasm. The enzyme catalyses L-methionine + ATP + H2O = S-adenosyl-L-methionine + phosphate + diphosphate. Its pathway is amino-acid biosynthesis; S-adenosyl-L-methionine biosynthesis; S-adenosyl-L-methionine from L-methionine: step 1/1. Functionally, catalyzes the formation of S-adenosylmethionine (AdoMet) from methionine and ATP. The overall synthetic reaction is composed of two sequential steps, AdoMet formation and the subsequent tripolyphosphate hydrolysis which occurs prior to release of AdoMet from the enzyme. This chain is S-adenosylmethionine synthase, found in Photorhabdus laumondii subsp. laumondii (strain DSM 15139 / CIP 105565 / TT01) (Photorhabdus luminescens subsp. laumondii).